The primary structure comprises 540 residues: Ubiquitin carboxyl-terminal hydrolase 17-like protein E (540 aa).

Residues 1–22 (MVVSLSFPEETGGENLPSAPLE) form a disordered region. In terms of domain architecture, USP spans 85–382 (CGLQNTGNSC…NAYVLFYVQQ (298 aa)). Cys-94 functions as the Nucleophile in the catalytic mechanism. His-341 serves as the catalytic Proton acceptor. Basic and acidic residues-rich tracts occupy residues 431–441 (NREKRAKKETS) and 508–520 (APDK…HNGD). 2 disordered regions span residues 431–461 (NREK…QKHG) and 499–540 (RSTA…QGGR). Residues 523-540 (LTSQGLMSPGQLCSQGGR) show a composition bias toward polar residues.

This sequence belongs to the peptidase C19 family. USP17 subfamily. In terms of assembly, interacts with SUDS3; the interaction is direct.

The protein resides in the nucleus. It is found in the endoplasmic reticulum. The enzyme catalyses Thiol-dependent hydrolysis of ester, thioester, amide, peptide and isopeptide bonds formed by the C-terminal Gly of ubiquitin (a 76-residue protein attached to proteins as an intracellular targeting signal).. In terms of biological role, deubiquitinating enzyme that removes conjugated ubiquitin from specific proteins to regulate different cellular processes that may include cell proliferation, progression through the cell cycle, apoptosis, cell migration, and the cellular response to viral infection. This Mus musculus (Mouse) protein is Ubiquitin carboxyl-terminal hydrolase 17-like protein E (Usp17le).